Here is a 160-residue protein sequence, read N- to C-terminus: 2-C-methyl-D-erythritol 2,4-cyclodiphosphate synthase (160 aa).

A divalent metal cation contacts are provided by D11 and H13. Residues D11–H13 and H37–S38 contribute to the 4-CDP-2-C-methyl-D-erythritol 2-phosphate site. H45 is a binding site for a divalent metal cation. 4-CDP-2-C-methyl-D-erythritol 2-phosphate contacts are provided by residues D59 to G61, F64 to D68, A103 to A109, T135 to E138, F142, and R145.

This sequence belongs to the IspF family. Homotrimer. The cofactor is a divalent metal cation.

The catalysed reaction is 4-CDP-2-C-methyl-D-erythritol 2-phosphate = 2-C-methyl-D-erythritol 2,4-cyclic diphosphate + CMP. It participates in isoprenoid biosynthesis; isopentenyl diphosphate biosynthesis via DXP pathway; isopentenyl diphosphate from 1-deoxy-D-xylulose 5-phosphate: step 4/6. Functionally, involved in the biosynthesis of isopentenyl diphosphate (IPP) and dimethylallyl diphosphate (DMAPP), two major building blocks of isoprenoid compounds. Catalyzes the conversion of 4-diphosphocytidyl-2-C-methyl-D-erythritol 2-phosphate (CDP-ME2P) to 2-C-methyl-D-erythritol 2,4-cyclodiphosphate (ME-CPP) with a corresponding release of cytidine 5-monophosphate (CMP). The chain is 2-C-methyl-D-erythritol 2,4-cyclodiphosphate synthase from Thiobacillus denitrificans (strain ATCC 25259 / T1).